The following is a 374-amino-acid chain: Very late expression factor 1 (374 aa).

Residues 169–349 (AIDTILNFID…NFDESSSDEE (181 aa)) enclose the Tyr recombinase domain. Catalysis depends on residues R210, K239, R303, and H326. A disordered region spans residues 328–374 (SPASTKPYLNKYNFDESSSDEESGGNNRDSSTGSSANSSSLYYQTGD). The active-site O-(3'-phospho-DNA)-tyrosine intermediate is Y335. Low complexity predominate over residues 357 to 367 (SSTGSSANSSS).

The protein belongs to the 'phage' integrase family.

Its function is as follows. Involved in very late gene activation. The chain is Very late expression factor 1 (VLF-1) from Orgyia pseudotsugata (Douglas-fir tussock moth).